Consider the following 608-residue polypeptide: Actin-interacting protein 1 (608 aa).

WD repeat units lie at residues 62 to 101, 106 to 149, 150 to 190, 193 to 232, 237 to 276, 323 to 362, 366 to 403, 444 to 483, 487 to 526, 531 to 570, and 575 to 607; these read EHSCAVNVAKYSPSGFYIASGDASGKIRIWDTVNKEHLLK, PIAG…GEIS, GQSK…FKMT, DHSRFVQAVRYSPDGKFFASAGFDGKVFLYDGTSSELVGE, AHKGGVYALAWKPDSTQLLTCSGDKTCRLWTVESRELVSE, GHNKPITVLGLSDDRSTIYTGSHDGVVTNWNSGSGTNDRI, GHGNQINGIAAWGDFVYTCGIDDSLRQFSVEGNSYTDY, PIKYEASSIAVNADTSDVAVGGDDQKLHIYTLKGGVLEPK, DHLGAVTDVSYSPDLKYLVACDAHRKVVLYSVEEYKPAHN, FHSARVNTVAWSPNSLLVASGSLDTTIIIWSVANPAKHTI, and HPQSQITRLVWLDNNTVISTGQDCNTKVWHVEN.

This sequence belongs to the WD repeat AIP1 family. Expressed in pupal wing cells.

The protein resides in the cytoplasm. Its subcellular location is the cytoskeleton. Functionally, induces disassembly of actin filaments in conjunction with ADF/cofilin family proteins. Together with GMF, promotes Arp2/3-nucleated actin filament array disassembly. Essential for organismal and cell viability. Required for the development of normal wing cell planar polarity. In egg chambers and together with GMF, plays an important role in directional migration of border cell clusters. This is Actin-interacting protein 1 (flr) from Drosophila melanogaster (Fruit fly).